Reading from the N-terminus, the 316-residue chain is MAFLNIFKQKRGDEASQLSAKGREEISQSIKICKSDDAANEHSCSGDCKTEIEEGEQAFAKLKIEHETPLLNSSKTPKIHFVVPTSQIDWQHDACLEDPKSVQYKISQWCDKNSAKFSNVGTGKTLNCAVSSLPKDIMDIDVMRGTKNNVLILPYFIWLNDLRSDDVEATLDGLVPDLLDENISREKLLETRPNVAVARERAFVFICSHTTRDKRCGITAPYLKKVFDSKLQEHGLYRDNSDYRAEGVKIAFVNHVGGHKFAANVQIYLRNPNTLIWLGRVTPTIVPSIVEHLIVPEEPTLPFPEKVRCIKKYQSW.

The protein belongs to the APD1 family.

The protein localises to the cytoplasm. Its subcellular location is the nucleus. Functionally, required for normal localization of actin patches. Involved in tolerance to sodium ions and hydrogen peroxide. This chain is Actin patches distal protein 1 (APD1), found in Saccharomyces cerevisiae (strain ATCC 204508 / S288c) (Baker's yeast).